A 422-amino-acid polypeptide reads, in one-letter code: Serine hydroxymethyltransferase (422 aa).

121–123 is a binding site for (6S)-5,6,7,8-tetrahydrofolate; it reads GHI. K227 bears the N6-(pyridoxal phosphate)lysine mark. E245 provides a ligand contact to (6S)-5,6,7,8-tetrahydrofolate.

The protein belongs to the SHMT family. In terms of assembly, homodimer. Pyridoxal 5'-phosphate is required as a cofactor.

Its subcellular location is the cytoplasm. The enzyme catalyses 5,10-methylenetetrahydromethanopterin + glycine + H2O = 5,6,7,8-tetrahydromethanopterin + L-serine. The protein operates within amino-acid biosynthesis; glycine biosynthesis; glycine from L-serine: step 1/1. Its function is as follows. Catalyzes the reversible interconversion of serine and glycine with tetrahydromethanopterin (H4MPT) serving as the one-carbon carrier. Also exhibits a pteridine-independent aldolase activity toward beta-hydroxyamino acids, producing glycine and aldehydes, via a retro-aldol mechanism. This chain is Serine hydroxymethyltransferase, found in Methanobrevibacter smithii (strain ATCC 35061 / DSM 861 / OCM 144 / PS).